The chain runs to 407 residues: Arginine biosynthesis bifunctional protein ArgJ (407 aa).

The substrate site is built by T169, K192, T203, E283, N402, and S407. T203 functions as the Nucleophile in the catalytic mechanism.

It belongs to the ArgJ family. In terms of assembly, heterotetramer of two alpha and two beta chains.

Its subcellular location is the cytoplasm. The enzyme catalyses N(2)-acetyl-L-ornithine + L-glutamate = N-acetyl-L-glutamate + L-ornithine. It catalyses the reaction L-glutamate + acetyl-CoA = N-acetyl-L-glutamate + CoA + H(+). The protein operates within amino-acid biosynthesis; L-arginine biosynthesis; L-ornithine and N-acetyl-L-glutamate from L-glutamate and N(2)-acetyl-L-ornithine (cyclic): step 1/1. It participates in amino-acid biosynthesis; L-arginine biosynthesis; N(2)-acetyl-L-ornithine from L-glutamate: step 1/4. Its function is as follows. Catalyzes two activities which are involved in the cyclic version of arginine biosynthesis: the synthesis of N-acetylglutamate from glutamate and acetyl-CoA as the acetyl donor, and of ornithine by transacetylation between N(2)-acetylornithine and glutamate. This chain is Arginine biosynthesis bifunctional protein ArgJ, found in Mycobacterium leprae (strain TN).